The sequence spans 3623 residues: Cubilin (3623 aa).

The signal sequence occupies residues 1–20; sequence MSSQFLWGFVTLLMIAELDG. The propeptide at 21–32 is removed in mature form; that stretch reads KTGKPEQRGQKR. The interval 39-46 is interaction with AMN; the sequence is PRMTTEEG. An N-linked (GlcNAc...) asparagine glycan is attached at asparagine 95. The region spanning 129–165 is the EGF-like 1 domain; it reads ERKVCSSNPCLNGGTCVNLHDSFVCICPSQWKGLFCS. 9 cysteine pairs are disulfide-bonded: cysteine 133–cysteine 144, cysteine 138–cysteine 153, cysteine 155–cysteine 164, cysteine 171–cysteine 187, cysteine 181–cysteine 196, cysteine 198–cysteine 207, cysteine 264–cysteine 277, cysteine 271–cysteine 286, and cysteine 289–cysteine 300. The EGF-like 2; calcium-binding domain maps to 167–208; that stretch reads DVNECVVYSGTPFGCQSGSTCVNTVGSFRCDCTPDTYGPQCA. An EGF-like 3; calcium-binding domain is found at 260-301; it reads DKDECSLQPSPCSEHAQCFNTQGSFYCGACPKGWQGNGYECQ. An EGF-like 4; calcium-binding domain is found at 302 to 345; sequence DINECEINNGGCSQAPLVPCLNTPGSFSCGNCPAGFSGDGRVCT. EGF-like domains are found at residues 346–385 and 395–430; these read PVDI…YTGN and LSNI…QNCT. 13 disulfides stabilise this stretch: cysteine 350–cysteine 363, cysteine 357–cysteine 376, cysteine 399–cysteine 409, cysteine 404–cysteine 418, cysteine 420–cysteine 429, cysteine 436–cysteine 447, cysteine 441–cysteine 456, cysteine 458–cysteine 467, cysteine 474–cysteine 500, cysteine 527–cysteine 549, cysteine 590–cysteine 616, cysteine 643–cysteine 665, and cysteine 708–cysteine 734. N-linked (GlcNAc...) asparagine glycosylation is present at asparagine 428. The EGF-like 7; calcium-binding domain occupies 432–468; that stretch reads NINDCSSNPCLNGGTCIDGINGFTCDCTSSWTGYYCQ. CUB domains are found at residues 474 to 586, 590 to 702, 708 to 816, 817 to 928, 932 to 1042, 1048 to 1161, 1165 to 1277, 1278 to 1389, 1391 to 1506, 1510 to 1619, 1620 to 1734, 1738 to 1850, 1852 to 1963, 1978 to 2091, 2092 to 2213, 2217 to 2334, 2336 to 2448, 2452 to 2565, 2570 to 2687, 2689 to 2801, 2805 to 2919, 2920 to 3035, 3037 to 3150, 3157 to 3274, 3278 to 3393, 3395 to 3507, and 3511 to 3623; these read CGGI…WEAK, CGGI…YLTT, CGGN…YQVA, CGGM…FSSD, CGEV…YEAI, CLYD…WDGS, CGGN…FRQR, CDNV…WFTH, CGGE…WRAV, CGGI…FREE, CGGR…YSAS, CGGS…FKNI, GNNN…WFAV, CGGF…FHKS, CGGY…YEAK, CGGT…YSIA, CGGT…FKSS, CGGD…YTST, CGGF…YSFT, CGGI…WTTN, CGGT…FISR, CGRT…YRAI, CGGI…FRET, CGGY…YTFV, CGGT…YQIA, CNRE…WTSS, and CGGT…MWSS. N-linked (GlcNAc...) asparagine glycosylation occurs at asparagine 491. Residues asparagine 711 and asparagine 749 are each glycosylated (N-linked (GlcNAc...) asparagine). Residues cysteine 761 and cysteine 779 are joined by a disulfide bond. A glycan (N-linked (GlcNAc...) asparagine) is linked at asparagine 781. An intrachain disulfide couples cysteine 817 to cysteine 842. Asparagine 857 carries an N-linked (GlcNAc...) asparagine glycan. 2 cysteine pairs are disulfide-bonded: cysteine 869–cysteine 891 and cysteine 932–cysteine 958. N-linked (GlcNAc...) asparagine glycosylation occurs at asparagine 957. Ca(2+) is bound at residue glutamate 980. N-linked (GlcNAc...) asparagine glycosylation is present at asparagine 984. Cysteine 985 and cysteine 1005 are joined by a disulfide. Ca(2+)-binding residues include aspartate 988, aspartate 1027, and leucine 1030. A disulfide bond links cysteine 1048 and cysteine 1074. Residues glutamate 1096, aspartate 1105, and aspartate 1146 each coordinate Ca(2+). Cysteine 1165 and cysteine 1191 are oxidised to a cystine. Asparagine 1168 is a glycosylation site (N-linked (GlcNAc...) asparagine). Ca(2+)-binding residues include glutamate 1213, aspartate 1221, aspartate 1262, glycine 1264, and glutamine 1265. Cysteines 1218 and 1240 form a disulfide. An intrachain disulfide couples cysteine 1278 to cysteine 1306. N-linked (GlcNAc...) asparagine glycans are attached at residues asparagine 1285, asparagine 1307, and asparagine 1319. Residue glutamate 1328 coordinates Ca(2+). A glycan (N-linked (GlcNAc...) asparagine) is linked at asparagine 1332. Cysteine 1333 and cysteine 1351 are oxidised to a cystine. Ca(2+) is bound by residues aspartate 1336, aspartate 1373, and isoleucine 1375. 2 cysteine pairs are disulfide-bonded: cysteine 1391–cysteine 1417 and cysteine 1444–cysteine 1466. The N-linked (GlcNAc...) asparagine glycan is linked to asparagine 1500. Cysteine 1510 and cysteine 1536 are joined by a disulfide. 3 N-linked (GlcNAc...) asparagine glycosylation sites follow: asparagine 1551, asparagine 1646, and asparagine 1671. A disulfide bridge links cysteine 1620 with cysteine 1647. 3 cysteine pairs are disulfide-bonded: cysteine 1675–cysteine 1697, cysteine 1738–cysteine 1764, and cysteine 1791–cysteine 1812. Residues asparagine 1802 and asparagine 1819 are each glycosylated (N-linked (GlcNAc...) asparagine). 3 cysteine pairs are disulfide-bonded: cysteine 1905/cysteine 1927, cysteine 1978/cysteine 2006, and cysteine 2032/cysteine 2054. N-linked (GlcNAc...) asparagine glycosylation is found at asparagine 2085 and asparagine 2117. Intrachain disulfides connect cysteine 2092/cysteine 2118 and cysteine 2217/cysteine 2247. The N-linked (GlcNAc...) asparagine glycan is linked to asparagine 2274. Disulfide bonds link cysteine 2275–cysteine 2297, cysteine 2336–cysteine 2363, cysteine 2390–cysteine 2411, cysteine 2452–cysteine 2478, and cysteine 2505–cysteine 2527. N-linked (GlcNAc...) asparagine glycosylation is present at asparagine 2400. 3 N-linked (GlcNAc...) asparagine glycosylation sites follow: asparagine 2531, asparagine 2581, and asparagine 2610. An intrachain disulfide couples cysteine 2570 to cysteine 2599. 7 disulfide bridges follow: cysteine 2628–cysteine 2649, cysteine 2689–cysteine 2715, cysteine 2742–cysteine 2764, cysteine 2805–cysteine 2831, cysteine 2860–cysteine 2883, cysteine 2920–cysteine 2946, and cysteine 2977–cysteine 2999. Residues asparagine 2813, asparagine 2875, asparagine 2945, and asparagine 2989 are each glycosylated (N-linked (GlcNAc...) asparagine). Threonine 3008 is modified (phosphothreonine). 2 disulfides stabilise this stretch: cysteine 3037/cysteine 3064 and cysteine 3091/cysteine 3113. N-linked (GlcNAc...) asparagine glycans are attached at residues asparagine 3042, asparagine 3106, asparagine 3125, and asparagine 3165. Disulfide bonds link cysteine 3157-cysteine 3185 and cysteine 3215-cysteine 3237. N-linked (GlcNAc...) asparagine glycans are attached at residues asparagine 3268, asparagine 3283, and asparagine 3290. Intrachain disulfides connect cysteine 3278–cysteine 3306 and cysteine 3332–cysteine 3354. Asparagine 3357, asparagine 3400, and asparagine 3430 each carry an N-linked (GlcNAc...) asparagine glycan. A disulfide bridge links cysteine 3395 with cysteine 3421. 3 cysteine pairs are disulfide-bonded: cysteine 3448-cysteine 3470, cysteine 3511-cysteine 3537, and cysteine 3564-cysteine 3586. N-linked (GlcNAc...) asparagine glycosylation occurs at asparagine 3533.

As to quaternary structure, interacts with AMN. Component of the cubam complex composed of one CUBN trimer and one AMN chain. The cubam complex can dimerize. Interacts with LRP2 in a dual-receptor complex in a calcium-dependent manner. Found in a complex with PID1/PCLI1, LRP1 and CUBNI. Interacts with LRP1 and PID1/PCLI1. In terms of processing, the precursor is cleaved by a trans-Golgi proteinase furin, removing a propeptide. N-glycosylated. Expressed to intestinal, renal and yalk sac apical membranes. In kidney, expressed in the proximal tubule.

The protein resides in the cell membrane. Its subcellular location is the endosome membrane. It is found in the lysosome membrane. In terms of biological role, endocytic receptor which plays a role in lipoprotein, vitamin and iron metabolism by facilitating their uptake. Acts together with LRP2 to mediate endocytosis of high-density lipoproteins, GC, hemoglobin, ALB, TF and SCGB1A1. Acts together with AMN to mediate endocytosis of the CBLIF-cobalamin complex. Binds to ALB, MB, Kappa and lambda-light chains, TF, hemoglobin, GC, SCGB1A1, APOA1, high density lipoprotein, and the CBLIF-cobalamin complex. Ligand binding requires calcium. Serves as important transporter in several absorptive epithelia, including intestine, renal proximal tubules and embryonic yolk sac. May play an important role in the development of the peri-implantation embryo through internalization of APOA1 and cholesterol. Binds to LGALS3 at the maternal-fetal interface. This is Cubilin (Cubn) from Rattus norvegicus (Rat).